Consider the following 239-residue polypeptide: 1-(5-phosphoribosyl)-5-[(5-phosphoribosylamino)methylideneamino] imidazole-4-carboxamide isomerase (239 aa).

D9 (proton acceptor) is an active-site residue. Residue D131 is the Proton donor of the active site.

It belongs to the HisA/HisF family.

The protein resides in the cytoplasm. It carries out the reaction 1-(5-phospho-beta-D-ribosyl)-5-[(5-phospho-beta-D-ribosylamino)methylideneamino]imidazole-4-carboxamide = 5-[(5-phospho-1-deoxy-D-ribulos-1-ylimino)methylamino]-1-(5-phospho-beta-D-ribosyl)imidazole-4-carboxamide. It participates in amino-acid biosynthesis; L-histidine biosynthesis; L-histidine from 5-phospho-alpha-D-ribose 1-diphosphate: step 4/9. The polypeptide is 1-(5-phosphoribosyl)-5-[(5-phosphoribosylamino)methylideneamino] imidazole-4-carboxamide isomerase (Phocaeicola vulgatus (strain ATCC 8482 / DSM 1447 / JCM 5826 / CCUG 4940 / NBRC 14291 / NCTC 11154) (Bacteroides vulgatus)).